We begin with the raw amino-acid sequence, 482 residues long: Immune evasion protein OPG047 (482 aa).

Residues Lys20–Ser90 enclose the BTB domain. Positions Cys125–His222 constitute a BACK domain. Kelch repeat units lie at residues Val273 to Asn319, Lys320 to Asn363, Ile365 to Arg408, Leu410 to Asn447, and Lys448 to Trp482.

This sequence belongs to the orthopoxvirus OPG047 family.

Its function is as follows. Might have a role in the suppression of host immune response. The polypeptide is Immune evasion protein OPG047 (OPG047) (Cynomys gunnisoni (Gunnison's prairie dog)).